We begin with the raw amino-acid sequence, 64 residues long: Temporin-ALf (64 aa).

A signal peptide spans 1-22 (MFTLKKSLLLLFFLGTINLSLC). A propeptide spanning residues 23–46 (EQERNAEEERRDEPDERNAEVEKR) is cleaved from the precursor. Position 62 is a leucine amide (leucine 62).

As to expression, expressed by the skin glands.

Its subcellular location is the secreted. Functionally, antimicrobial peptide with activity against Gram-positive and Gram-negative bacteria and against fungi. Has been tested against S.aureus (MIC=2.5 ug/mL), B.pumilus (MIC=5.0 ug/mL), B.cereus (MIC=30.0 ug/mL), E.coli (MIC=2.5 ug/mL), B.dysenteriae (MIC=5.0 ug/mL), A.cacoaceticus (MIC=30.0 ug/mL), P.aeruginosa (MIC=5.0 ug/mL) and C.albicans (MIC=2.5 ug/mL). Also shows a weak hemolytic activity. The sequence is that of Temporin-ALf from Amolops loloensis (Lolokou Sucker Frog).